We begin with the raw amino-acid sequence, 37 residues long: Cytochrome b6-f complex subunit 5 (37 aa).

The helical transmembrane segment at L5–A25 threads the bilayer.

Belongs to the PetG family. The 4 large subunits of the cytochrome b6-f complex are cytochrome b6, subunit IV (17 kDa polypeptide, PetD), cytochrome f and the Rieske protein, while the 4 small subunits are PetG, PetL, PetM and PetN. The complex functions as a dimer.

It is found in the plastid. The protein resides in the chloroplast thylakoid membrane. Component of the cytochrome b6-f complex, which mediates electron transfer between photosystem II (PSII) and photosystem I (PSI), cyclic electron flow around PSI, and state transitions. PetG is required for either the stability or assembly of the cytochrome b6-f complex. The protein is Cytochrome b6-f complex subunit 5 of Mesostigma viride (Green alga).